Reading from the N-terminus, the 300-residue chain is Protoheme IX farnesyltransferase 1 (300 aa).

The next 9 helical transmembrane spans lie at 28-48 (VVAL…PTIL), 54-74 (VAGL…NHLI), 100-120 (ALLF…VFTN), 122-142 (LTAW…TAYL), 149-169 (NIVI…TAVT), 176-196 (ALLL…ALAI), 222-242 (CILL…LVGM), 243-263 (SGPL…YKAW), and 280-300 (FSIY…YLWA).

This sequence belongs to the UbiA prenyltransferase family. Protoheme IX farnesyltransferase subfamily.

The protein resides in the cell inner membrane. It catalyses the reaction heme b + (2E,6E)-farnesyl diphosphate + H2O = Fe(II)-heme o + diphosphate. It participates in porphyrin-containing compound metabolism; heme O biosynthesis; heme O from protoheme: step 1/1. Functionally, converts heme B (protoheme IX) to heme O by substitution of the vinyl group on carbon 2 of heme B porphyrin ring with a hydroxyethyl farnesyl side group. In Shewanella sp. (strain ANA-3), this protein is Protoheme IX farnesyltransferase 1.